We begin with the raw amino-acid sequence, 223 residues long: Ribose-5-phosphate isomerase A (223 aa).

Substrate is bound by residues Thr32–Thr35, Asp83–Asp86, and Lys96–Gly99. Glu105 (proton acceptor) is an active-site residue. Lys123 contributes to the substrate binding site.

The protein belongs to the ribose 5-phosphate isomerase family. In terms of assembly, homodimer.

It catalyses the reaction aldehydo-D-ribose 5-phosphate = D-ribulose 5-phosphate. Its pathway is carbohydrate degradation; pentose phosphate pathway; D-ribose 5-phosphate from D-ribulose 5-phosphate (non-oxidative stage): step 1/1. In terms of biological role, catalyzes the reversible conversion of ribose-5-phosphate to ribulose 5-phosphate. The protein is Ribose-5-phosphate isomerase A of Acinetobacter baumannii (strain ATCC 17978 / DSM 105126 / CIP 53.77 / LMG 1025 / NCDC KC755 / 5377).